The primary structure comprises 181 residues: Organ-specific protein S2 (181 aa).

Tandem repeats lie at residues 59–84 (HAKE…DNEI), 85–110 (HAKE…DNEI), 111–136 (HANE…DNEI), and 137–162 (HANE…DNEI). A 4 X 26 AA tandem repeats region spans residues 59 to 162 (HAKENMGAIG…NASAYGDNEI (104 aa)). The disordered stretch occupies residues 94 to 181 (GEFEPRPNAS…PRPSMTKYNA (88 aa)).

The protein to organ specific protein P4. As to expression, expressed in stems.

This is Organ-specific protein S2 from Pisum sativum (Garden pea).